A 200-amino-acid polypeptide reads, in one-letter code: Fibrillarin-like rRNA/tRNA 2'-O-methyltransferase (200 aa).

Residues 62–63 (TT), 78–79 (EF), 103–104 (DA), and 123–126 (DVAQ) each bind S-adenosyl-L-methionine.

It belongs to the methyltransferase superfamily. Fibrillarin family. In terms of assembly, interacts with nop5. Component of box C/D small ribonucleoprotein (sRNP) particles that contain rpl7ae, FlpA and nop5, plus a guide RNA.

Functionally, involved in pre-rRNA and tRNA processing. Utilizes the methyl donor S-adenosyl-L-methionine to catalyze the site-specific 2'-hydroxyl methylation of ribose moieties in rRNA and tRNA. Site specificity is provided by a guide RNA that base pairs with the substrate. Methylation occurs at a characteristic distance from the sequence involved in base pairing with the guide RNA. The polypeptide is Fibrillarin-like rRNA/tRNA 2'-O-methyltransferase (Methanoculleus marisnigri (strain ATCC 35101 / DSM 1498 / JR1)).